The following is a 408-amino-acid chain: Aminopeptidase T (408 aa).

Positions 250, 316, 340, 345, 376, and 378 each coordinate a divalent metal cation.

This sequence belongs to the peptidase M29 family. As to quaternary structure, homodimer. Requires Co(2+) as cofactor. It depends on Zn(2+) as a cofactor. Mg(2+) is required as a cofactor.

Metal-dependent exopeptidase. The protein is Aminopeptidase T of Thermus aquaticus.